The primary structure comprises 82 residues: RNA-binding protein Hfq (82 aa).

The region spanning 11-71 is the Sm domain; it reads DTFLNHVRKT…ISTIMPGAPI (61 aa).

Belongs to the Hfq family. In terms of assembly, homohexamer.

Its function is as follows. RNA chaperone that binds small regulatory RNA (sRNAs) and mRNAs to facilitate mRNA translational regulation in response to envelope stress, environmental stress and changes in metabolite concentrations. Also binds with high specificity to tRNAs. This Rhodopseudomonas palustris (strain BisA53) protein is RNA-binding protein Hfq.